We begin with the raw amino-acid sequence, 343 residues long: MVIQTNLSYRFFILIVFLFTLANPKSDSDLKNELVSLRSTAESGVISFNNDDVSKFITSVSTPRPYSLIIFFDAVHLHGNSQLRLPEFRREFRLVSATFITNNNNESNGTKLFFCEIESTHSEASFRRFAVESLPHISLVSPTTENLTESDQMDGGDFTGLAESMAEFVERQTKLTVCSIQRPPLISKTQIGIIVAIIIISTPILIKKILKGETLLHDHRIWLVGAVFVYFFSVSGTMHNIIREMPMYIKDYEDSSKFVFFIEESEMQLGAEGFFVGFLYTVVGLLLAFVTNVVVRVKKLDEQRMAMLLALSISFWAVRKVVYLDNWKTGYEIYPYWPSSWRG.

Residues 1–22 (MVIQTNLSYRFFILIVFLFTLA) form the signal peptide. At 23–185 (NPKSDSDLKN…TVCSIQRPPL (163 aa)) the chain is on the lumenal side. N-linked (GlcNAc...) asparagine glycosylation is found at asparagine 105, asparagine 108, and asparagine 146. Residues 186–206 (ISKTQIGIIVAIIIISTPILI) form a helical membrane-spanning segment. Over 207-220 (KKILKGETLLHDHR) the chain is Cytoplasmic. The helical transmembrane segment at 221-241 (IWLVGAVFVYFFSVSGTMHNI) threads the bilayer. Topologically, residues 242–273 (IREMPMYIKDYEDSSKFVFFIEESEMQLGAEG) are lumenal. Residues 274–294 (FFVGFLYTVVGLLLAFVTNVV) form a helical membrane-spanning segment. Residues 295–304 (VRVKKLDEQR) lie on the Cytoplasmic side of the membrane. A helical membrane pass occupies residues 305–325 (MAMLLALSISFWAVRKVVYLD). Residues 326–343 (NWKTGYEIYPYWPSSWRG) are Lumenal-facing.

The protein belongs to the OST3/OST6 family. In terms of assembly, component of the oligosaccharyltransferase (OST) complex.

Its subcellular location is the endoplasmic reticulum membrane. Subunit of the oligosaccharyl transferase (OST) complex that catalyzes the initial transfer of a defined glycan (Glc(3)Man(9)GlcNAc(2) in eukaryotes) from the lipid carrier dolichol-pyrophosphate to an asparagine residue within an Asn-X-Ser/Thr consensus motif in nascent polypeptide chains, the first step in protein N-glycosylation. N-glycosylation occurs cotranslationally and the complex associates with the Sec61 complex at the channel-forming translocon complex that mediates protein translocation across the endoplasmic reticulum (ER). All subunits are required for a maximal enzyme activity. This chain is Probable dolichyl-diphosphooligosaccharide--protein glycosyltransferase subunit 3A (OST3A), found in Arabidopsis thaliana (Mouse-ear cress).